A 207-amino-acid chain; its full sequence is Ribosomal RNA small subunit methyltransferase G (207 aa).

Residues glycine 74, leucine 79, 125–126, and arginine 140 contribute to the S-adenosyl-L-methionine site; that span reads VE.

It belongs to the methyltransferase superfamily. RNA methyltransferase RsmG family.

The protein resides in the cytoplasm. The catalysed reaction is guanosine(527) in 16S rRNA + S-adenosyl-L-methionine = N(7)-methylguanosine(527) in 16S rRNA + S-adenosyl-L-homocysteine. Functionally, specifically methylates the N7 position of guanine in position 527 of 16S rRNA. The chain is Ribosomal RNA small subunit methyltransferase G from Shewanella pealeana (strain ATCC 700345 / ANG-SQ1).